Here is a 217-residue protein sequence, read N- to C-terminus: Large ribosomal subunit protein uL3 (217 aa).

Polar residues predominate over residues 133-145 (GRASHGNSRSHNV). The tract at residues 133 to 153 (GRASHGNSRSHNVPGSIGMAQ) is disordered. An N5-methylglutamine modification is found at Gln-153.

This sequence belongs to the universal ribosomal protein uL3 family. As to quaternary structure, part of the 50S ribosomal subunit. Forms a cluster with proteins L14 and L19. Post-translationally, methylated by PrmB.

Functionally, one of the primary rRNA binding proteins, it binds directly near the 3'-end of the 23S rRNA, where it nucleates assembly of the 50S subunit. The chain is Large ribosomal subunit protein uL3 from Ralstonia pickettii (strain 12J).